The primary structure comprises 130 residues: Large ribosomal subunit protein uL22 (130 aa).

It belongs to the universal ribosomal protein uL22 family. As to quaternary structure, part of the 50S ribosomal subunit.

Its function is as follows. This protein binds specifically to 23S rRNA; its binding is stimulated by other ribosomal proteins, e.g. L4, L17, and L20. It is important during the early stages of 50S assembly. It makes multiple contacts with different domains of the 23S rRNA in the assembled 50S subunit and ribosome. Functionally, the globular domain of the protein is located near the polypeptide exit tunnel on the outside of the subunit, while an extended beta-hairpin is found that lines the wall of the exit tunnel in the center of the 70S ribosome. The sequence is that of Large ribosomal subunit protein uL22 from Clavibacter sepedonicus (Clavibacter michiganensis subsp. sepedonicus).